The following is a 457-amino-acid chain: Serine--tRNA ligase (457 aa).

An L-serine-binding site is contributed by Thr-252 to Glu-254. Residues Arg-283–Glu-285 and Val-299 each bind ATP. Glu-306 lines the L-serine pocket. Glu-370 to Ser-373 provides a ligand contact to ATP. Thr-406 lines the L-serine pocket.

It belongs to the class-II aminoacyl-tRNA synthetase family. Type-1 seryl-tRNA synthetase subfamily. As to quaternary structure, homodimer. The tRNA molecule binds across the dimer.

The protein localises to the cytoplasm. It catalyses the reaction tRNA(Ser) + L-serine + ATP = L-seryl-tRNA(Ser) + AMP + diphosphate + H(+). The catalysed reaction is tRNA(Sec) + L-serine + ATP = L-seryl-tRNA(Sec) + AMP + diphosphate + H(+). It functions in the pathway aminoacyl-tRNA biosynthesis; selenocysteinyl-tRNA(Sec) biosynthesis; L-seryl-tRNA(Sec) from L-serine and tRNA(Sec): step 1/1. Functionally, catalyzes the attachment of serine to tRNA(Ser). Is also able to aminoacylate tRNA(Sec) with serine, to form the misacylated tRNA L-seryl-tRNA(Sec), which will be further converted into selenocysteinyl-tRNA(Sec). The sequence is that of Serine--tRNA ligase from Saccharolobus solfataricus (strain ATCC 35092 / DSM 1617 / JCM 11322 / P2) (Sulfolobus solfataricus).